A 333-amino-acid polypeptide reads, in one-letter code: Glyceraldehyde-3-phosphate dehydrogenase (333 aa).

NAD(+) contacts are provided by residues 12 to 13, Asp-36, Arg-80, and Ser-120; that span reads RI. D-glyceraldehyde 3-phosphate is bound by residues 150 to 152, Thr-181, Arg-196, 209 to 210, and Arg-232; these read SCT and TG. Cys-151 functions as the Nucleophile in the catalytic mechanism. Position 314 (Asn-314) interacts with NAD(+).

Belongs to the glyceraldehyde-3-phosphate dehydrogenase family. In terms of assembly, homotetramer.

It is found in the cytoplasm. The enzyme catalyses D-glyceraldehyde 3-phosphate + phosphate + NAD(+) = (2R)-3-phospho-glyceroyl phosphate + NADH + H(+). It participates in carbohydrate degradation; glycolysis; pyruvate from D-glyceraldehyde 3-phosphate: step 1/5. Catalyzes the oxidative phosphorylation of glyceraldehyde 3-phosphate (G3P) to 1,3-bisphosphoglycerate (BPG) using the cofactor NAD. The first reaction step involves the formation of a hemiacetal intermediate between G3P and a cysteine residue, and this hemiacetal intermediate is then oxidized to a thioester, with concomitant reduction of NAD to NADH. The reduced NADH is then exchanged with the second NAD, and the thioester is attacked by a nucleophilic inorganic phosphate to produce BPG. This Cereibacter sphaeroides (Rhodobacter sphaeroides) protein is Glyceraldehyde-3-phosphate dehydrogenase (gapB).